The primary structure comprises 264 residues: ATP synthase subunit a (264 aa).

6 helical membrane passes run 27-47 (VHLDTLLFSIISGAIFLFVFS), 87-107 (VGPLALTIFCWVFIMNAIDLI), 131-151 (DISGTLGLSIGVFFLIIFYTI), 172-192 (LLIPVNLALESVTLLAKPVSL), 196-216 (LFGNMYAGELIFILIAVMYMA), and 230-250 (LAWAIFHILVITLQAFIFMML).

This sequence belongs to the ATPase A chain family. In terms of assembly, F-type ATPases have 2 components, CF(1) - the catalytic core - and CF(0) - the membrane proton channel. CF(1) has five subunits: alpha(3), beta(3), gamma(1), delta(1), epsilon(1). CF(0) has three main subunits: a(1), b(2) and c(9-12). The alpha and beta chains form an alternating ring which encloses part of the gamma chain. CF(1) is attached to CF(0) by a central stalk formed by the gamma and epsilon chains, while a peripheral stalk is formed by the delta and b chains.

The protein localises to the cell inner membrane. Functionally, key component of the proton channel; it plays a direct role in the translocation of protons across the membrane. This is ATP synthase subunit a from Pasteurella multocida (strain Pm70).